The chain runs to 926 residues: Peripheral plasma membrane protein CASK (926 aa).

Residues 12–276 enclose the Protein kinase domain; the sequence is YELCEVIGKG…VYEALNHPWL (265 aa). Residues 18 to 26 and Lys41 contribute to the ATP site; that span reads IGKGPFSVV. The residue at position 51 (Ser51) is a Phosphoserine. Asp141 is a catalytic residue. Phosphoserine; by autocatalysis occurs at positions 151 and 155. Thr182 bears the Phosphothreonine mark. Phosphoserine is present on residues Lys192 and Ser313. The segment at 305 to 315 is calmodulin-binding; sequence KGAVLAAVSSH. 2 L27 domains span residues 343-398 and 402-455; these read AERA…SPQI and PSDA…YSDE. A required for interaction with NRXN1 (via C-terminal tail) region spans residues 482–909; it reads MENVTRVRLV…DETIRHLEEA (428 aa). A PDZ domain is found at 489–564; the sequence is RLVQFQKNTD…MLREMRGSIT (76 aa). Residues Tyr571 and Ser577 each carry the phosphoserine modification. The interval 574–610 is disordered; sequence QSSSCERDSPSTSRQSPANGHSSTNNSVSDLPSTTQP. The SH3 domain maps to 612–682; the sequence is GRQIYVRAQF…PSPELQEWRV (71 aa). A Guanylate kinase-like domain is found at 739–911; it reads RKTLVLLGAH…TIRHLEEAVE (173 aa).

In the N-terminal section; belongs to the protein kinase superfamily. CAMK Ser/Thr protein kinase family. CaMK subfamily. The protein belongs to the MAGUK family. CASK and LIN7 form two mutually exclusive tripartite complexes with APBA1 or CASKIN1. Component of the brain-specific heterotrimeric complex (LIN-10-LIN-2-LIN-7 complex) composed of at least APBA1, CASK, and LIN7, which associates with the motor protein KIF17 to transport vesicles along microtubules. Forms a heterotrimeric complex with DLG1 and LIN7B via their L27 domains. Identified in a complex with ACTN4, IQGAP1, MAGI2, NPHS1, SPTAN1 and SPTBN1. Part of a complex containing CASK, TBR1 and TSPYL2. Interacts with WHRN. Interacts (via the PDZ, SH3 and guanylate kinase-like domains) with NRXN1 (via C-terminus). Interacts with CASKIN1, APBA1, LIN7(A/B/C) and L27 domain of DLG1 and isoform 2 of DLG4. Interacts with FCHSD2. Interacts with KIRREL3. Interacts with TBR1. Interacts with TSPYL2. It depends on Unlike other protein kinases, does not require a divalent cation such as magnesium for catalytic activity. as a cofactor. As to expression, ubiquitous. Expression is significantly greater in brain relative to kidney, lung, and liver and in fetal brain and kidney relative to lung and liver.

It is found in the nucleus. The protein localises to the cytoplasm. Its subcellular location is the cell membrane. The catalysed reaction is L-seryl-[protein] + ATP = O-phospho-L-seryl-[protein] + ADP + H(+). It catalyses the reaction L-threonyl-[protein] + ATP = O-phospho-L-threonyl-[protein] + ADP + H(+). Its activity is regulated as follows. Differs from archetypal CaMK members in that the kinase domain exhibits a constitutively active conformation and the autoinhibitory region does not engage in direct contact with the ATP-binding cleft, although it still binds Ca(2+)/CAM. Functionally, multidomain scaffolding Mg(2+)-independent protein kinase that catalyzes the phosphotransfer from ATP to proteins such as NRXN1, and plays a role in synaptic transmembrane protein anchoring and ion channel trafficking. Contributes to neural development and regulation of gene expression via interaction with the transcription factor TBR1. Binds to cell-surface proteins, including amyloid precursor protein, neurexins and syndecans. May mediate a link between the extracellular matrix and the actin cytoskeleton via its interaction with syndecan and with the actin/spectrin-binding protein 4.1. Component of the LIN-10-LIN-2-LIN-7 complex, which associates with the motor protein KIF17 to transport vesicles containing N-methyl-D-aspartate (NMDA) receptor subunit NR2B along microtubules. This chain is Peripheral plasma membrane protein CASK, found in Homo sapiens (Human).